The primary structure comprises 167 residues: Thioredoxin-like protein HI_1115 (167 aa).

Residues 10 to 27 (GLSLFLTFIVITSILDFV) form a helical membrane-spanning segment. One can recognise a Thioredoxin domain in the interval 30 to 167 (PVVPEEINKI…VRLFFAEFFG (138 aa)). Cysteine 69 and cysteine 72 are oxidised to a cystine.

Belongs to the thioredoxin family.

Its subcellular location is the cell membrane. The sequence is that of Thioredoxin-like protein HI_1115 from Haemophilus influenzae (strain ATCC 51907 / DSM 11121 / KW20 / Rd).